The primary structure comprises 1509 residues: ABC transporter G family member 38 (1509 aa).

Positions 196 to 467 (LGLVGLNFAK…FERCGFRCPE (272 aa)) constitute an ABC transporter 1 domain. 229-236 (GPPSSGKT) contributes to the ATP binding site. The ABC transmembrane type-2 1 domain maps to 545-758 (ELLKTSCSKE…AYIAFSSNEM (214 aa)). Helical transmembrane passes span 563–583 (FVYI…STVF), 598–618 (IYIG…FADL), 651–671 (IPSS…TMGF), 682–702 (LLVV…TAGL), 707–727 (VVTN…GGFI), 733–753 (IPKW…YIAF), and 791–811 (YWIA…LFSL). An ABC transporter 2 domain is found at 908–1160 (MSFNEINYYV…KVVEYFEAIP (253 aa)). 953–960 (GVSGAGKT) provides a ligand contact to ATP. One can recognise an ABC transmembrane type-2 2 domain in the interval 1233-1447 (NQFKLCLWKQ…TVYGLIVSQY (215 aa)). Transmembrane regions (helical) follow at residues 1252 to 1272 (YNLV…TIFW), 1284 to 1304 (LLVI…ENSV), 1336 to 1356 (VVVE…IVYP), 1367 to 1387 (FFWF…YGMM), 1397 to 1417 (VASI…GFFI), 1425 to 1445 (WWVW…LIVS), and 1478 to 1498 (FMGV…FTYA).

It belongs to the ABC transporter superfamily. ABCG family. PDR (TC 3.A.1.205) subfamily.

Its subcellular location is the membrane. Its function is as follows. May be a general defense protein. The sequence is that of ABC transporter G family member 38 from Oryza sativa subsp. japonica (Rice).